The chain runs to 212 residues: Large ribosomal subunit protein bL25 (212 aa).

The disordered stretch occupies residues methionine 1–leucine 25. Residues lysine 13–arginine 24 are compositionally biased toward basic and acidic residues.

This sequence belongs to the bacterial ribosomal protein bL25 family. CTC subfamily. Part of the 50S ribosomal subunit; part of the 5S rRNA/L5/L18/L25 subcomplex. Contacts the 5S rRNA. Binds to the 5S rRNA independently of L5 and L18.

In terms of biological role, this is one of the proteins that binds to the 5S RNA in the ribosome where it forms part of the central protuberance. The sequence is that of Large ribosomal subunit protein bL25 from Leptospira borgpetersenii serovar Hardjo-bovis (strain L550).